Here is a 245-residue protein sequence, read N- to C-terminus: Adenosylcobinamide-GDP ribazoletransferase (245 aa).

Helical transmembrane passes span 31–51 (FGRAVLCYPLVGVLIGVVLYG), 61–81 (PLLQAALLLSLWVALSGALHL), 113–133 (AAVVALVLVLLLKFGALAALL), 138–158 (PGLLLLAPWLARSSLPLLFLT), and 192–212 (LAFGLSGLLALLVTLMLFAWL).

It belongs to the CobS family. Requires Mg(2+) as cofactor.

It localises to the cell inner membrane. The catalysed reaction is alpha-ribazole + adenosylcob(III)inamide-GDP = adenosylcob(III)alamin + GMP + H(+). It catalyses the reaction alpha-ribazole 5'-phosphate + adenosylcob(III)inamide-GDP = adenosylcob(III)alamin 5'-phosphate + GMP + H(+). It functions in the pathway cofactor biosynthesis; adenosylcobalamin biosynthesis; adenosylcobalamin from cob(II)yrinate a,c-diamide: step 7/7. Functionally, joins adenosylcobinamide-GDP and alpha-ribazole to generate adenosylcobalamin (Ado-cobalamin). Also synthesizes adenosylcobalamin 5'-phosphate from adenosylcobinamide-GDP and alpha-ribazole 5'-phosphate. The chain is Adenosylcobinamide-GDP ribazoletransferase from Pseudomonas paraeruginosa (strain DSM 24068 / PA7) (Pseudomonas aeruginosa (strain PA7)).